We begin with the raw amino-acid sequence, 197 residues long: Small ribosomal subunit protein uS4B (197 aa).

In terms of domain architecture, S4 RNA-binding spans 88–150 (SRLDNMVYRM…SRKTEMFVNN (63 aa)).

The protein belongs to the universal ribosomal protein uS4 family. In terms of assembly, part of the 30S ribosomal subunit. Contacts protein S5. The interaction surface between S4 and S5 is involved in control of translational fidelity.

Its function is as follows. One of the primary rRNA binding proteins, it binds directly to 16S rRNA where it nucleates assembly of the body of the 30S subunit. Functionally, with S5 and S12 plays an important role in translational accuracy. The sequence is that of Small ribosomal subunit protein uS4B (rpsD2) from Clostridium perfringens (strain 13 / Type A).